A 639-amino-acid chain; its full sequence is E3 ubiquitin-protein ligase HEL2 (639 aa).

The tract at residues 1 to 55 (MSESVKENVTPTRNFRRTQGPQNNTKPHNDRKNFRRKQKKNNLSAEPNLTTSSAD) is disordered. Serine 2 is subject to N-acetylserine. 2 stretches are compositionally biased toward polar residues: residues 7–26 (ENVT…NNTK) and 43–54 (LSAEPNLTTSSA). The residue at position 57 (threonine 57) is a Phosphothreonine. An RING-type zinc finger spans residues 64–104 (CVICARKLTYVSLTPCHHKTCHICGFRQRALYNKKSCLICR). An LIM zinc-binding domain is found at 222–292 (PMCAFCSGKR…QTCLDNKFVV (71 aa)). The span at 343-354 (SISSLPGSSSGS) shows a compositional bias: low complexity. Disordered stretches follow at residues 343-367 (SISS…PEES) and 550-631 (LESK…GKQK). The residue at position 354 (serine 354) is a Phosphoserine.

This sequence belongs to the ZNF598/HEL2 family. As to quaternary structure, interacts with the E2 ubiquitin-conjugating enzyme UBC4. Interacts with histones H3 and H4.

Its subcellular location is the cytoplasm. It catalyses the reaction S-ubiquitinyl-[E2 ubiquitin-conjugating enzyme]-L-cysteine + [acceptor protein]-L-lysine = [E2 ubiquitin-conjugating enzyme]-L-cysteine + N(6)-ubiquitinyl-[acceptor protein]-L-lysine.. The protein operates within protein modification; protein ubiquitination. E3 ubiquitin-protein ligase that plays a key role in the ribosome quality control (RQC), a pathway that takes place when a ribosome has stalled during translation, leading to degradation of nascent peptide chains. HEL2 is activated when ribosomes are stalled within an mRNA following translation of prematurely polyadenylated mRNAs. Acts as a ribosome collision sensor: specifically recognizes and binds collided ribosome and ubiquitinates the 40S ribosomal proteins RPS20/uS10 and RPS3/uS3. Catalyzes 'Lys-63'-linked polyubiquitination of RPS20/uS10, promoting recruitment of the RQT (ribosome quality control trigger) complex, which drives the disassembly of stalled ribosomes, followed by degradation of nascent peptides. HEL2 also acts as an activator of the No-Go decay (NGD) pathway by mediating polyubiquitination of monoubiquitinated RPS3/uS3 and RPS7/es7: RPS3/uS3 and RPS7/es7 are first monoubiquitinated by MAG2 and MOT2/NOT4, respectively, and HEL2 mediates formation of 'Lys-63'-linked polyubiquitin chains on monoubiquitin, leading to activation of the NGD pathway in a CUE2-mediated endonucleolytic cleavage. Polyubiquitination of RPS3/uS3 also triggers degradation of non-functional 18S rRNA. The RQC pathway and the integrated stress response (ISR) antagonize each other: HEL2 prevents the activation of GCN2, while GCN2 suppresses RQC activation. The RQC pathway functions as a preventive quality control in the secretory pathway: HEL2 binds preferentially to the pre-engaged secretory ribosome-nascent chain complexes and prevents mistargeting of secretory proteins into mitochondria. Independently of its role in RQC, also involved in the polyubiquitination and proteasomal-degradation of excess histone proteins. The chain is E3 ubiquitin-protein ligase HEL2 from Saccharomyces cerevisiae (strain ATCC 204508 / S288c) (Baker's yeast).